A 71-amino-acid polypeptide reads, in one-letter code: MKLIALCCLLLLGLLGFLAAPGVASPSRHTGPGNGSGSGAGSGNPFRSPSSQQRPLYYDAPIGKPSKTMYA.

The N-terminal stretch at 1–24 is a signal peptide; the sequence is MKLIALCCLLLLGLLGFLAAPGVA. Positions 25-26 are excised as a propeptide; it reads SP. Residues 26–71 form a disordered region; sequence PSRHTGPGNGSGSGAGSGNPFRSPSSQQRPLYYDAPIGKPSKTMYA. The span at 32 to 42 shows a compositional bias: gly residues; sequence PGNGSGSGAGS.

In terms of tissue distribution, hemolymph (at protein level).

The protein resides in the secreted. The protein is Immune-induced peptide 18 (IM18) of Drosophila melanogaster (Fruit fly).